Reading from the N-terminus, the 525-residue chain is uncharacterized protein (525 aa).

Residues 1 to 21 form the signal peptide; that stretch reads MLECLSALLVLFAGGGGSVLA. The Extracellular portion of the chain corresponds to 22-448; that stretch reads AVQSKTVADP…ISAASQLDKR (427 aa). Residues 242 to 264 are disordered; it reads KVSSENCSKDTDDKSGSKKERNT. The helical transmembrane segment at 449–469 threads the bilayer; that stretch reads IFIFTAITVSITTLMMLGFSY. At 470-525 the chain is on the cytoplasmic side; it reads RSRVSFRDHSIDDSDDDNDWSDDEVEFDEEYFYSLPVSIPEKGISLDKMAQQLGVE.

Its subcellular location is the membrane. This is an uncharacterized protein from Saccharomyces cerevisiae (strain ATCC 204508 / S288c) (Baker's yeast).